The following is a 558-amino-acid chain: Protein OS-9 homolog (558 aa).

Positions 1 to 17 (MLLKSLALIASSSLAAT) are cleaved as a signal peptide. An N-linked (GlcNAc...) asparagine glycan is attached at asparagine 68. Residues 111-237 (GDCLFYEQGF…QVGTPRLCKD (127 aa)) enclose the MRH domain. An intrachain disulfide couples cysteine 113 to cysteine 126. Positions 133, 197, 219, and 225 each coordinate a mannooligosaccharide derivative. Disulfide bonds link cysteine 190–cysteine 223 and cysteine 205–cysteine 235. Disordered regions lie at residues 435–508 (SKKL…DEDE) and 539–558 (KDLA…GLSD). Positions 441-466 (KKEAASTKREEAKKQVEASVEEKAVD) are enriched in basic and acidic residues. A compositionally biased stretch (polar residues) spans 474-492 (DTVTSTQTFFRTQTLSTAE). A compositionally biased stretch (acidic residues) spans 543-558 (DKEDDDDDYEDYGLSD).

Belongs to the OS-9 family. Interacts with missfolded ER lumenal proteins.

Its subcellular location is the endoplasmic reticulum membrane. Lectin involved in the quality control of the secretory pathway. As a member of the endoplasmic reticulum-associated degradation lumenal (ERAD-L) surveillance system, targets misfolded endoplasmic reticulum lumenal glycoproteins for degradation. In Yarrowia lipolytica (strain CLIB 122 / E 150) (Yeast), this protein is Protein OS-9 homolog (YOS9).